Consider the following 965-residue polypeptide: Aminopeptidase N (965 aa).

Topologically, residues 1–8 are cytoplasmic; it reads MAKGFYIS. Residues 9–32 traverse the membrane as a helical; Signal-anchor for type II membrane protein segment; sequence KALGILAILLGVAAVATIIALSVV. The interval 33–65 is cytosolic Ser/Thr-rich junction; that stretch reads YAQEKNKNAERGTAAPTSPTGPTTTSATTLDQS. Over 33–965 the chain is Extracellular; sequence YAQEKNKNAE…VVLNWFKDHS (933 aa). Residues 40-65 form a disordered region; that stretch reads NAERGTAAPTSPTGPTTTSATTLDQS. Residues 44–61 show a composition bias toward low complexity; the sequence is GTAAPTSPTGPTTTSATT. The tract at residues 66 to 965 is metalloprotease; it reads KPWNRYRLPT…VVLNWFKDHS (900 aa). The N-linked (GlcNAc...) asparagine glycan is linked to Asn125. Residue Tyr173 is modified to Sulfotyrosine. N-linked (GlcNAc...) asparagine glycosylation is found at Asn231, Asn260, and Asn316. 349–353 contributes to the substrate binding site; that stretch reads GAMEN. His385 contacts Zn(2+). Catalysis depends on Glu386, which acts as the Proton acceptor. Zn(2+)-binding residues include His389 and Glu408. Sulfotyrosine is present on Tyr416. N-linked (GlcNAc...) asparagine glycans are attached at residues Asn508, Asn569, Asn624, Asn680, Asn734, and Asn738. 2 cysteine pairs are disulfide-bonded: Cys760–Cys767 and Cys797–Cys833.

It belongs to the peptidase M1 family. Homodimer. Interacts with SLC6A19. It depends on Zn(2+) as a cofactor. In terms of processing, sulfated. Post-translationally, N- and O-glycosylated. May undergo proteolysis and give rise to a soluble form.

It is found in the cell membrane. It carries out the reaction Release of an N-terminal amino acid, Xaa-|-Yaa- from a peptide, amide or arylamide. Xaa is preferably Ala, but may be most amino acids including Pro (slow action). When a terminal hydrophobic residue is followed by a prolyl residue, the two may be released as an intact Xaa-Pro dipeptide.. In terms of biological role, broad specificity aminopeptidase which plays a role in the final digestion of peptides generated from hydrolysis of proteins by gastric and pancreatic proteases. Also involved in the processing of various peptides including peptide hormones, such as angiotensin III and IV, neuropeptides, and chemokines. May also be involved the cleavage of peptides bound to major histocompatibility complex class II molecules of antigen presenting cells. May have a role in angiogenesis and promote cholesterol crystallization. May have a role in amino acid transport by acting as binding partner of amino acid transporter SLC6A19 and regulating its activity. The sequence is that of Aminopeptidase N (ANPEP) from Bos taurus (Bovine).